Here is a 111-residue protein sequence, read N- to C-terminus: Large ribosomal subunit protein uL22 (111 aa).

This sequence belongs to the universal ribosomal protein uL22 family. In terms of assembly, part of the 50S ribosomal subunit.

Its function is as follows. This protein binds specifically to 23S rRNA; its binding is stimulated by other ribosomal proteins, e.g. L4, L17, and L20. It is important during the early stages of 50S assembly. It makes multiple contacts with different domains of the 23S rRNA in the assembled 50S subunit and ribosome. Functionally, the globular domain of the protein is located near the polypeptide exit tunnel on the outside of the subunit, while an extended beta-hairpin is found that lines the wall of the exit tunnel in the center of the 70S ribosome. This chain is Large ribosomal subunit protein uL22, found in Mycoplasma mycoides subsp. mycoides SC (strain CCUG 32753 / NCTC 10114 / PG1).